Reading from the N-terminus, the 121-residue chain is Small ribosomal subunit protein uS13 (121 aa).

The tract at residues His91–Lys121 is disordered. Residues Gln100–Lys121 show a composition bias toward basic residues.

This sequence belongs to the universal ribosomal protein uS13 family. As to quaternary structure, part of the 30S ribosomal subunit. Forms a loose heterodimer with protein S19. Forms two bridges to the 50S subunit in the 70S ribosome.

In terms of biological role, located at the top of the head of the 30S subunit, it contacts several helices of the 16S rRNA. In the 70S ribosome it contacts the 23S rRNA (bridge B1a) and protein L5 of the 50S subunit (bridge B1b), connecting the 2 subunits; these bridges are implicated in subunit movement. Contacts the tRNAs in the A and P-sites. This chain is Small ribosomal subunit protein uS13, found in Prochlorococcus marinus (strain MIT 9301).